We begin with the raw amino-acid sequence, 87 residues long: UPF0250 protein ETA_23570 (87 aa).

This sequence belongs to the UPF0250 family.

The protein is UPF0250 protein ETA_23570 of Erwinia tasmaniensis (strain DSM 17950 / CFBP 7177 / CIP 109463 / NCPPB 4357 / Et1/99).